Reading from the N-terminus, the 118-residue chain is Large ribosomal subunit protein bL20 (118 aa).

This sequence belongs to the bacterial ribosomal protein bL20 family.

Binds directly to 23S ribosomal RNA and is necessary for the in vitro assembly process of the 50S ribosomal subunit. It is not involved in the protein synthesizing functions of that subunit. This Thermosipho melanesiensis (strain DSM 12029 / CIP 104789 / BI429) protein is Large ribosomal subunit protein bL20.